A 137-amino-acid polypeptide reads, in one-letter code: Universal stress protein in QAH/OAS sulfhydrylase 3'region (137 aa).

The protein belongs to the universal stress protein A family.

The polypeptide is Universal stress protein in QAH/OAS sulfhydrylase 3'region (Thermus aquaticus).